The following is a 1026-amino-acid chain: uncharacterized protein (1026 aa).

WD repeat units lie at residues 14 to 53, 62 to 104, 148 to 187, and 937 to 977; these read LLDEGLDVSSIHCFDQYLIVGQCSGQVMVFDVSTDNHFTL, HSVS…RRAT, GHEDWPILFPFKDEALLIPVAYSDGSVSLWSVDWSALTFK, and NAEC…VKFL.

It localises to the cytoplasm. Its subcellular location is the nucleus. This is an uncharacterized protein from Schizosaccharomyces pombe (strain 972 / ATCC 24843) (Fission yeast).